The primary structure comprises 956 residues: Lon protease homolog, mitochondrial 1 (956 aa).

Disordered stretches follow at residues 37-57 (NNNN…NNNN) and 83-123 (KKKG…GNEK). The segment covering 91-123 (NNDDNDNEKNEKNEKKVKNEKKEKNEKNDGNEK) has biased composition (basic and acidic residues). The 199-residue stretch at 159–357 (VVIYPSNSVN…MLYHMILNEQ (199 aa)) folds into the Lon N-terminal domain. 511–518 (GPPGTGKT) lines the ATP pocket. In terms of domain architecture, Lon proteolytic spans 747–945 (VTPIGVVNGL…KDVFEVAFPN (199 aa)). The span at 777–795 (KPLSSLPPSQQQQNQLEPS) shows a compositional bias: low complexity. A disordered region spans residues 777–800 (KPLSSLPPSQQQQNQLEPSIKTTG). Active-site residues include Ser-851 and Lys-894.

It belongs to the peptidase S16 family. As to quaternary structure, homohexamer or homoheptamer. Organized in a ring with a central cavity.

The protein localises to the mitochondrion matrix. It carries out the reaction Hydrolysis of proteins in presence of ATP.. ATP-dependent serine protease that mediates the selective degradation of misfolded, unassembled or oxidatively damaged polypeptides as well as certain short-lived regulatory proteins in the mitochondrial matrix. May also have a chaperone function in the assembly of inner membrane protein complexes. Participates in the regulation of mitochondrial gene expression and in the maintenance of the integrity of the mitochondrial genome. Binds to mitochondrial DNA in a site-specific manner. The sequence is that of Lon protease homolog, mitochondrial 1 from Dictyostelium discoideum (Social amoeba).